The chain runs to 372 residues: 4-hydroxy-3-methylbut-2-en-1-yl diphosphate synthase (flavodoxin) (372 aa).

[4Fe-4S] cluster-binding residues include Cys-270, Cys-273, Cys-305, and Glu-312.

The protein belongs to the IspG family. The cofactor is [4Fe-4S] cluster.

It carries out the reaction (2E)-4-hydroxy-3-methylbut-2-enyl diphosphate + oxidized [flavodoxin] + H2O + 2 H(+) = 2-C-methyl-D-erythritol 2,4-cyclic diphosphate + reduced [flavodoxin]. It functions in the pathway isoprenoid biosynthesis; isopentenyl diphosphate biosynthesis via DXP pathway; isopentenyl diphosphate from 1-deoxy-D-xylulose 5-phosphate: step 5/6. Functionally, converts 2C-methyl-D-erythritol 2,4-cyclodiphosphate (ME-2,4cPP) into 1-hydroxy-2-methyl-2-(E)-butenyl 4-diphosphate. The sequence is that of 4-hydroxy-3-methylbut-2-en-1-yl diphosphate synthase (flavodoxin) from Vibrio vulnificus (strain CMCP6).